Here is a 287-residue protein sequence, read N- to C-terminus: uncharacterized protein (287 aa).

GTP-binding positions include 43–50 (GKTGAGKS), 90–93 (DLPG), and 156–159 (DKAE). The 93-residue stretch at 48 to 140 (GKSSLCNALF…TDEHFYRQVI (93 aa)) folds into the G domain.

To E.coli YkfA and YeeP.

This is an uncharacterized protein from Escherichia coli (strain K12).